Here is a 336-residue protein sequence, read N- to C-terminus: MGITIENVSKSFGSFQAVKQVDLDIASGSLVALLGPSGSGKSTLLRLIAGLEMPDTGRILLTGKDATYQSVQERNIGFVFQHYALFKHMTVRQNIAFGLELRKVPRAKINARVAELLELVQLTGLGDRYPSQLSGGQRQRVALARALAVEPKVLLLDEPFGALDAKVRKELRAWLRRLHDDVHVTTVFVTHDQEEAMEVADQIVVMNKGQVEQVGTPAEIYDHPASPFVMSFIGPVNVLRSRVFQQSEGTAAHCDIFLRPRDIIIETRPNGNTVSARIHRIIHLGWEIQVELRLDDGQELMAHLSRERFDELHLEPQQQVFIKPREAKSFPLYYSI.

Residues 3–233 (ITIENVSKSF…PASPFVMSFI (231 aa)) enclose the ABC transporter domain. Residue 35–42 (GPSGSGKS) participates in ATP binding.

It belongs to the ABC transporter superfamily. Sulfate/tungstate importer (TC 3.A.1.6) family. As to quaternary structure, the complex is composed of two ATP-binding proteins (CysA), two transmembrane proteins (CysT and CysW) and a solute-binding protein (CysP).

The protein resides in the cell inner membrane. It catalyses the reaction sulfate(out) + ATP + H2O = sulfate(in) + ADP + phosphate + H(+). The catalysed reaction is thiosulfate(out) + ATP + H2O = thiosulfate(in) + ADP + phosphate + H(+). Functionally, part of the ABC transporter complex CysAWTP involved in sulfate/thiosulfate import. Responsible for energy coupling to the transport system. This Thermosynechococcus vestitus (strain NIES-2133 / IAM M-273 / BP-1) protein is Sulfate/thiosulfate import ATP-binding protein CysA.